We begin with the raw amino-acid sequence, 225 residues long: Sugar fermentation stimulation protein homolog (225 aa).

Belongs to the SfsA family.

This Sulfolobus acidocaldarius (strain ATCC 33909 / DSM 639 / JCM 8929 / NBRC 15157 / NCIMB 11770) protein is Sugar fermentation stimulation protein homolog.